The following is a 231-amino-acid chain: 7-cyano-7-deazaguanine synthase (231 aa).

ATP is bound at residue 8-18 (FSGGQDSTTCL). Zn(2+) contacts are provided by Cys-188, Cys-197, Cys-200, and Cys-203.

The protein belongs to the QueC family. Requires Zn(2+) as cofactor.

It carries out the reaction 7-carboxy-7-deazaguanine + NH4(+) + ATP = 7-cyano-7-deazaguanine + ADP + phosphate + H2O + H(+). Its pathway is purine metabolism; 7-cyano-7-deazaguanine biosynthesis. In terms of biological role, catalyzes the ATP-dependent conversion of 7-carboxy-7-deazaguanine (CDG) to 7-cyano-7-deazaguanine (preQ(0)). The protein is 7-cyano-7-deazaguanine synthase of Shigella dysenteriae serotype 1 (strain Sd197).